Reading from the N-terminus, the 139-residue chain is Basic phospholipase A2 beta-bungarotoxin A2 chain (139 aa).

The signal sequence occupies residues 1–9; it reads AVCVSLLGA. Positions 10 to 17 are excised as a propeptide; the sequence is ANIPPHPF. Ca(2+) contacts are provided by Tyr45, Gly47, and Gly49. Cys46 and Cys62 are disulfide-bonded. Residue His65 is part of the active site. Residue Asp66 participates in Ca(2+) binding.

Belongs to the phospholipase A2 family. Group I subfamily. D49 sub-subfamily. Heterodimer; disulfide-linked. The A chains have phospholipase A2 activity and the B chains show homology with the basic protease inhibitors. Ca(2+) serves as cofactor. Expressed by the venom gland.

Its subcellular location is the secreted. The enzyme catalyses a 1,2-diacyl-sn-glycero-3-phosphocholine + H2O = a 1-acyl-sn-glycero-3-phosphocholine + a fatty acid + H(+). In terms of biological role, snake venom phospholipase A2 (PLA2) that shows presynaptic neurotoxicity. PLA2 catalyzes the calcium-dependent hydrolysis of the 2-acyl groups in 3-sn-phosphoglycerides. The polypeptide is Basic phospholipase A2 beta-bungarotoxin A2 chain (Bungarus candidus (Malayan krait)).